Consider the following 1423-residue polypeptide: Protein Shroom2 (1423 aa).

A disordered region spans residues Met-1–Ala-101. Residues Ser-8 to Trp-27 are compositionally biased toward low complexity. 2 stretches are compositionally biased toward polar residues: residues Glu-28–Ile-69 and Gly-83–Asp-93. The residue at position 103 (Ser-103) is a Phosphoserine. Positions Ala-116–Phe-171 are disordered. Over residues Pro-119–Asp-130 the composition is skewed to polar residues. Phosphoserine is present on residues Ser-185, Ser-197, and Ser-291. 5 disordered regions span residues Ser-300–Lys-357, Thr-586–Arg-630, Glu-758–Gln-855, Pro-872–Asp-930, and Val-1045–Thr-1085. The 103-residue stretch at Leu-575 to Gly-677 folds into the ASD1 domain. Basic and acidic residues predominate over residues Ser-761–Glu-771. A phosphoserine mark is found at Ser-806, Ser-830, Ser-831, and Ser-833. Thr-834 bears the Phosphothreonine mark. Low complexity predominate over residues Pro-872–Ser-885. Residues Asp-891–Phe-923 are compositionally biased toward polar residues. Phosphoserine is present on residues Ser-918 and Ser-920. The segment covering Pro-1054–Pro-1065 has biased composition (pro residues). Phosphoserine is present on residues Ser-1072 and Ser-1329. The ASD2 domain occupies Glu-1092–Gln-1418.

The protein belongs to the shroom family. As to quaternary structure, interacts with F-actin.

Its subcellular location is the apical cell membrane. The protein localises to the cell junction. It localises to the tight junction. The protein resides in the cytoplasm. It is found in the cytoskeleton. In terms of biological role, may be involved in endothelial cell morphology changes during cell spreading. In the retinal pigment epithelium, may regulate the biogenesis of melanosomes and promote their association with the apical cell surface by inducing gamma-tubulin redistribution. In Rattus norvegicus (Rat), this protein is Protein Shroom2 (Shroom2).